The primary structure comprises 302 residues: Putative T-box protein 34 (302 aa).

The T-box DNA-binding region spans Ile5 to Gln180.

The protein localises to the nucleus. This chain is Putative T-box protein 34 (tbx-34), found in Caenorhabditis elegans.